The primary structure comprises 376 residues: Palmitoyl-[acyl-carrier-protein] 4-desaturase 2, chloroplastic (376 aa).

A chloroplast-targeting transit peptide spans 1-33 (MELHLALRASPLPAADPGRRPPPPRGNFATNCT). Residues glutamate 114, glutamate 149, histidine 152, glutamate 202, glutamate 235, and histidine 238 each coordinate Fe cation.

Belongs to the fatty acid desaturase type 2 family. As to quaternary structure, homodimer. The cofactor is Fe(2+). Preferentially expressed in the flower labellum.

It is found in the plastid. It localises to the chloroplast stroma. It carries out the reaction hexadecanoyl-[ACP] + 2 reduced [2Fe-2S]-[ferredoxin] + O2 + 2 H(+) = (4Z)-hexadecenoyl-[ACP] + 2 oxidized [2Fe-2S]-[ferredoxin] + 2 H2O. The enzyme catalyses octadecanoyl-[ACP] + 2 reduced [2Fe-2S]-[ferredoxin] + O2 + 2 H(+) = (9Z)-octadecenoyl-[ACP] + 2 oxidized [2Fe-2S]-[ferredoxin] + 2 H2O. Its pathway is lipid metabolism; fatty acid metabolism. Its function is as follows. Converts stearoyl-ACP to oleoyl-ACP by introduction of a cis double bond between carbons 9 and 10 of the acyl chain. Converts palmitoyl-ACP to (4Z)-hexadec-4-enoyl-ACP by introduction of a cis double bond between carbons 4 and 5 of the acyl chain. Catalyzes the desaturation of saturated fatty acid 18:0 and 16:0 to generate 18:1 (delta-9) and 16:1 (delta-4) intermediates, expected to give rise to 9-alkenes and 12-alkenes, respectively. The polypeptide is Palmitoyl-[acyl-carrier-protein] 4-desaturase 2, chloroplastic (SAD2) (Ophrys sphegodes (Early spider orchid)).